We begin with the raw amino-acid sequence, 239 residues long: Small ribosomal subunit protein uS2 (239 aa).

The protein belongs to the universal ribosomal protein uS2 family.

This Synechococcus sp. (strain WH7803) protein is Small ribosomal subunit protein uS2.